The primary structure comprises 258 residues: uncharacterized protein (258 aa).

The signal sequence occupies residues 1–20 (MKCFQKLYIFILILIVLMAG). C21 is lipidated: N-palmitoyl cysteine. C21 is lipidated: S-diacylglycerol cysteine.

This sequence belongs to the staphylococcal tandem lipoprotein family.

It localises to the cell membrane. This is an uncharacterized protein from Staphylococcus aureus (strain bovine RF122 / ET3-1).